A 184-amino-acid polypeptide reads, in one-letter code: Elongation factor P (184 aa).

This sequence belongs to the elongation factor P family.

Its subcellular location is the cytoplasm. The protein operates within protein biosynthesis; polypeptide chain elongation. Its function is as follows. Involved in peptide bond synthesis. Stimulates efficient translation and peptide-bond synthesis on native or reconstituted 70S ribosomes in vitro. Probably functions indirectly by altering the affinity of the ribosome for aminoacyl-tRNA, thus increasing their reactivity as acceptors for peptidyl transferase. This chain is Elongation factor P, found in Mycoplasma mycoides subsp. mycoides SC (strain CCUG 32753 / NCTC 10114 / PG1).